We begin with the raw amino-acid sequence, 468 residues long: MDFYSSLLPFLILIYLEFCSGFNRVCYYNGWALYRDSEHALKPENIDAFLCTHLVFAFGAIDETGTRIYVPEVFEDMHLFERMNELRHRNEDLNLVLSVGGWDMGSEAWSEVLASKDNMQTFVKEAIVYLRLHDFDGIDLDWEYPTFRGSKPIDREKFTQLIEIFRHEMDIEETPDDKWDLCLSVAVDPSEYMSSSSYEIDKITKNIDFYNLKMYDFHGHWNDPVLVKHHSALTSSSSLPSVNELAKMWVQRGVPKRKINIGIPFFGRSYRTAQPNATIGDPALGPGSDGGIGIPVSNICHLIRGGTKEHYLKEENVPFIVNGDEWVGFDNPRSVREKAALVRNNRLGGIMVWAIDMDDHSGWCGEKFPLMMSIIHGLGEYVDYMSDTLEAEREMINKKIRKAAREISYYSDKGNSTMAKKMEDKLNQLKDHLSAVQAHQSVQWANVQYSAGLGGKPLPSKDTPSWSW.

The signal sequence occupies residues methionine 1–glycine 21. Positions phenylalanine 22 to tyrosine 381 constitute a GH18 domain. A disulfide bridge connects residues cysteine 26 and cysteine 51. Chitin-binding positions include valine 73 to phenylalanine 74 and glycine 100 to aspartate 103. Glutamate 143 acts as the Proton donor in catalysis. Residues tyrosine 144, lysine 213–aspartate 216, and tryptophan 353 each bind chitin. Residues serine 386–glutamine 440 adopt a coiled-coil conformation.

Belongs to the glycosyl hydrolase 18 family. As to expression, prismatic layer of shell (at protein level). Expressed primarily in the mantle with highest level in the outer epithelium of the mantle edge and lower level in the mantle pallium.

The protein resides in the secreted. It catalyses the reaction Random endo-hydrolysis of N-acetyl-beta-D-glucosaminide (1-&gt;4)-beta-linkages in chitin and chitodextrins.. The chain is Putative chitinase 1 from Margaritifera margaritifera (Freshwater pearl mussel).